A 482-amino-acid polypeptide reads, in one-letter code: Retrovirus-related Pol polyprotein from type-1 retrotransposable element R2 (482 aa).

Residues 1–84 (AYADDLILFA…DYFKYLGSRY (84 aa)) enclose the Reverse transcriptase domain. Residues 208-482 (QIPAVEKFYQ…ATGGRGRGDI (275 aa)) are nucleic acid-binding endonuclease.

The enzyme catalyses DNA(n) + a 2'-deoxyribonucleoside 5'-triphosphate = DNA(n+1) + diphosphate. This is Retrovirus-related Pol polyprotein from type-1 retrotransposable element R2 from Popillia japonica (Japanese beetle).